The chain runs to 254 residues: Splicing factor tls1 (254 aa).

Over residues 69 to 83 (KEKQLNTANEPHEAN) the composition is skewed to basic and acidic residues. Disordered regions lie at residues 69–90 (KEKQ…SAQS) and 195–216 (RKRQ…LRTS). A compositionally biased stretch (basic residues) spans 195-204 (RKRQKKRARM). Positions 205 to 216 (KEKLDSKALRTS) are enriched in basic and acidic residues.

This sequence belongs to the TLS1 family. Component of the spliceosome. Interacts with brr2.

The protein localises to the cytoplasm. It localises to the nucleus. Functionally, plays a role in pre-mRNA splicing by facilitating excision of introns featuring long spacing between the branchpoint and 3'-splice site. Assists the splicing of several components involved in chromatin organization, such as several shelterin complex subunits. The chain is Splicing factor tls1 from Schizosaccharomyces pombe (strain 972 / ATCC 24843) (Fission yeast).